The primary structure comprises 172 residues: Adenine phosphoribosyltransferase (172 aa).

This sequence belongs to the purine/pyrimidine phosphoribosyltransferase family. Homodimer.

It is found in the cytoplasm. It carries out the reaction AMP + diphosphate = 5-phospho-alpha-D-ribose 1-diphosphate + adenine. It participates in purine metabolism; AMP biosynthesis via salvage pathway; AMP from adenine: step 1/1. In terms of biological role, catalyzes a salvage reaction resulting in the formation of AMP, that is energically less costly than de novo synthesis. This Clostridium beijerinckii (strain ATCC 51743 / NCIMB 8052) (Clostridium acetobutylicum) protein is Adenine phosphoribosyltransferase.